The following is a 355-amino-acid chain: Uroporphyrinogen decarboxylase (355 aa).

Substrate contacts are provided by residues 23–27 (RQAGR), Asp-72, Tyr-148, Ser-203, and His-321.

It belongs to the uroporphyrinogen decarboxylase family. Homodimer.

Its subcellular location is the cytoplasm. It catalyses the reaction uroporphyrinogen III + 4 H(+) = coproporphyrinogen III + 4 CO2. Its pathway is porphyrin-containing compound metabolism; protoporphyrin-IX biosynthesis; coproporphyrinogen-III from 5-aminolevulinate: step 4/4. Its function is as follows. Catalyzes the decarboxylation of four acetate groups of uroporphyrinogen-III to yield coproporphyrinogen-III. In Chloroflexus aurantiacus (strain ATCC 29366 / DSM 635 / J-10-fl), this protein is Uroporphyrinogen decarboxylase.